The chain runs to 148 residues: Lysozyme C, milk isozyme (148 aa).

Residues 1–18 (MKALLIVGLLLLSVAVQG) form the signal peptide. Positions 19–148 (KKFQRCELAR…LRSYVQGCRV (130 aa)) constitute a C-type lysozyme domain. 4 disulfides stabilise this stretch: Cys24/Cys146, Cys48/Cys134, Cys83/Cys99, and Cys95/Cys113. Residues Glu53 and Asp71 contribute to the active site.

It belongs to the glycosyl hydrolase 22 family.

The enzyme catalyses Hydrolysis of (1-&gt;4)-beta-linkages between N-acetylmuramic acid and N-acetyl-D-glucosamine residues in a peptidoglycan and between N-acetyl-D-glucosamine residues in chitodextrins.. Its function is as follows. Lysozymes have primarily a bacteriolytic function; those in tissues and body fluids are associated with the monocyte-macrophage system and enhance the activity of immunoagents. The protein is Lysozyme C, milk isozyme of Bos taurus (Bovine).